Here is an 858-residue protein sequence, read N- to C-terminus: MVNFTVDQIRSIMDKKANIRNMSVIAHVDHGKSTLTDSLVCKAGIIASARAGETRFTDTRKDEQERCITIKSTAISLFYELSENDLAFIKQSKDGCGFLINLIDSPGHVDFSSEVTAALRVTDGALVVVDCVSGVCVQTETVLRQAIAERIRPVLMMNKMDRALLELQLEPEALYQTFQRIVENVNVIISTYGEGESGPMGNIMIDPVLGTVGFGSGLHGWAFTLKQFAEMYVAKFAAKGEGQLAPSERCKKVEDMMKKLWGDRYFDPSNGKFSKSAVNADGKKLPRTFCQLILDPIFKVFDAIMNFKKEETAKLIEKLDIKLDSEDKDKEGKQLLKSVMRRWLPAGEALLQMITIHLPSPVTAQKYRCELLYEGPPDDEAAMGVKNCDPKGPLMMYISKMVPTTDKGRFYAFGRVFSGVVSTGLKVRIMGPNFTPGKKEDLYIKPIQRTILMMGRYVEPIEDVPCGNIVGLVGVDQYLVKTGTISTFEHAHNMRVMKFSVSPVVRVAVEAKNPADLPKLVEGLKRLAKSDPMVQCIIEESGEHIIAGAGELHLEICLKDLEEDHACIPIKKSDPVVSYRETVSEESSQMCLSKSPNKHNRLFMKARPFPDGLAEDIDKGDVSARQELKTRARYLAEKYEWDVTEARKIWCFGPDGSGPNILTDVTKGVQYLNEIKDSVVAGFQWATKEGVLCEENLRGVRFDVHDVTLHADAIHRGGGQIIPTARRVLYACVLTAQPRLMEPIYLVEIQCPEQVVGGIYGVLNRKRGHVFEESQVAGTPMFVVKAYLPVNESFGFTADLRSNTGGQAFPQCVFDHWQILPGDPFDNTTRPSQVVAETRKRKGLKEGVSALDNFLDKL.

Residues 17-362 (ANIRNMSVIA…MITIHLPSPV (346 aa)) form the tr-type G domain. Residues 26-33 (AHVDHGKS), 158-161 (NKMD), and 216-218 (SGL) each bind GTP. A Diphthamide modification is found at H715.

This sequence belongs to the TRAFAC class translation factor GTPase superfamily. Classic translation factor GTPase family. EF-G/EF-2 subfamily. As to quaternary structure, binds to 80S ribosomes. Actively translating ribosomes show mutually exclusive binding of eIF5a (EIF5A or EIF5A2) and EEF2/eEF2. Interacts with serbp1; interaction sequesters eef2/eEF2 at the A-site of the ribosome, thereby blocking the interaction sites of the mRNA-tRNA complex, promoting ribosome stabilization and hibernation. Interacts with habp4; interaction takes place at the A-site of hibernating ribosomes and promotes ribosome stabilization.

It is found in the cytoplasm. It localises to the nucleus. The enzyme catalyses GTP + H2O = GDP + phosphate + H(+). Its function is as follows. Catalyzes the GTP-dependent ribosomal translocation step during translation elongation. During this step, the ribosome changes from the pre-translocational (PRE) to the post-translocational (POST) state as the newly formed A-site-bound peptidyl-tRNA and P-site-bound deacylated tRNA move to the P and E sites, respectively. Catalyzes the coordinated movement of the two tRNA molecules, the mRNA and conformational changes in the ribosome. This is Elongation factor 2 from Xenopus laevis (African clawed frog).